A 95-amino-acid polypeptide reads, in one-letter code: Cliotide T1 (95 aa).

The segment at residues 1–30 (GIPCGESCVFIPCITGAIGCSCKSKVCYRN) is a cross-link (cyclopeptide (Gly-Asn)). 3 disulfide bridges follow: C4–C20, C8–C22, and C13–C27. A propeptide spans 31 to 95 (HVIAAEAKTM…KDHLKMSITN (65 aa)) (removed in mature form).

In terms of processing, contains 3 disulfide bonds. Post-translationally, this is a cyclic peptide. Expressed in flower, stem, shoot, root, leaf, seed, pod and nodule (at protein level).

Functionally, probably participates in a plant defense mechanism. Active against Gram-negative bacteria E.coli ATCC 700926 (MIC=1.1 uM), K.pneumoniae ATTC 13883 (MIC=2.7 uM) and P.aeruginosa ATCC 39018 (MIC=4.7 uM). Has hemolytic and cytotoxic activity. The sequence is that of Cliotide T1 from Clitoria ternatea (Butterfly pea).